The following is a 1476-amino-acid chain: Copper-transporting ATPase 1 (1476 aa).

Residues 1–642 lie on the Cytoplasmic side of the membrane; it reads MEPSMDVNSV…HKREIKQWRS (642 aa). HMA domains follow at residues 8-74 and 85-151; these read NSVT…FDAL and TDTL…LETG. Residues Thr18, Cys19, and Cys22 each contribute to the Cu(+) site. Phosphothreonine is present on Thr152. HMA domains are found at residues 171–237 and 276–342; these read VVLK…FPAF and STAT…PGQY. Cu(+) contacts are provided by Cys182, Cys185, Cys287, and Cys290. Thr326 is subject to Phosphothreonine. Phosphoserine occurs at positions 338, 352, 356, and 361. 3 HMA domains span residues 376–442, 478–544, and 554–620; these read QETV…FDAV, SKCY…FGAT, and GILK…FEAS. Positions 387, 390, 489, 492, 565, and 568 each coordinate Cu(+). The helical transmembrane segment at 643–665 threads the bilayer; that stretch reads SFLVSLFFCTPVMGLMMYMMAME. Residues Asn674 and Asn685 are each glycosylated (N-linked (GlcNAc...) asparagine). 3 helical membrane passes run 695-717, 736-760, and 770-788; these read ILPG…QFFG, MDVL…VAMY, and SFDT…RWLE. An N-linked (GlcNAc...) asparagine glycan is attached at Asn887. The helical transmembrane segment at 930–952 threads the bilayer; sequence YFVPFIVLVSIATLLVWIIIGFQ. Asn953 carries N-linked (GlcNAc...) asparagine glycosylation. Residues 978–998 traverse the membrane as a helical segment; the sequence is AFQASITVLCIACPCSLGLAT. Asp1034 (4-aspartylphosphate intermediate) is an active-site residue. N-linked (GlcNAc...) asparagine glycans are attached at residues Asn1130 and Asn1134. The next 2 membrane-spanning stretches (helical) occupy residues 1347-1373 and 1379-1397; these read INFL…IGLV and GSAA…SLFL. Phosphoserine occurs at positions 1420 and 1422. An N-linked (GlcNAc...) asparagine glycan is attached at Asn1448. Phosphoserine is present on residues Ser1450, Ser1453, Ser1456, Ser1459, Ser1463, Ser1466, and Ser1476.

It belongs to the cation transport ATPase (P-type) (TC 3.A.3) family. In terms of assembly, monomer. Interacts with PDZD11. Interacts with ATOX1 and COMMD1. Interacts with TYRP1. Directly interacts with SOD3; this interaction is copper-dependent and is required for SOD3 activity. In terms of tissue distribution, expressed in most tissues except liver.

The protein resides in the golgi apparatus. It localises to the trans-Golgi network membrane. The protein localises to the cell membrane. The catalysed reaction is Cu(+)(in) + ATP + H2O = Cu(+)(out) + ADP + phosphate + H(+). May function in the export of copper from the cytoplasm to an intracellular organelle. It may serve as well for the export of other metals. This chain is Copper-transporting ATPase 1 (ATP7A), found in Cricetulus griseus (Chinese hamster).